Consider the following 576-residue polypeptide: Proline--tRNA ligase (576 aa).

It belongs to the class-II aminoacyl-tRNA synthetase family. ProS type 1 subfamily. Homodimer.

Its subcellular location is the cytoplasm. It carries out the reaction tRNA(Pro) + L-proline + ATP = L-prolyl-tRNA(Pro) + AMP + diphosphate. Its function is as follows. Catalyzes the attachment of proline to tRNA(Pro) in a two-step reaction: proline is first activated by ATP to form Pro-AMP and then transferred to the acceptor end of tRNA(Pro). As ProRS can inadvertently accommodate and process non-cognate amino acids such as alanine and cysteine, to avoid such errors it has two additional distinct editing activities against alanine. One activity is designated as 'pretransfer' editing and involves the tRNA(Pro)-independent hydrolysis of activated Ala-AMP. The other activity is designated 'posttransfer' editing and involves deacylation of mischarged Ala-tRNA(Pro). The misacylated Cys-tRNA(Pro) is not edited by ProRS. This Dechloromonas aromatica (strain RCB) protein is Proline--tRNA ligase.